The following is a 212-amino-acid chain: Large ribosomal subunit protein mL48 (212 aa).

Residues 1–28 (MNGALGKVLCLKNDTIFKQAFSLLRFRT) constitute a mitochondrion transit peptide. Residue Lys-199 is modified to N6-succinyllysine.

It belongs to the mitochondrion-specific ribosomal protein mL48 family. Component of the mitochondrial ribosome large subunit (39S) which comprises a 16S rRNA and about 50 distinct proteins. Interacts with OXA1L.

It is found in the mitochondrion. The sequence is that of Large ribosomal subunit protein mL48 (MRPL48) from Bos taurus (Bovine).